Consider the following 334-residue polypeptide: Chitinase 9 (334 aa).

The signal sequence occupies residues 1 to 23 (MKATTTAVALLVAAAAMAAQVVA). The 41-residue stretch at 24 to 64 (EQCGSQAGGALCPNCLCCSSYGWCGSTSDYCGDGCQSQCDG) folds into the Chitin-binding type-1 domain. 8 disulfides stabilise this stretch: Cys-26–Cys-41, Cys-35–Cys-47, Cys-38–Cys-65, Cys-40–Cys-54, Cys-58–Cys-62, Cys-107–Cys-169, Cys-181–Cys-189, and Cys-288–Cys-320. The active-site Proton donor is the Glu-151.

This sequence belongs to the glycosyl hydrolase 19 family. Chitinase class I subfamily. In terms of tissue distribution, expressed at high levels in roots, sheaths and meristems.

The catalysed reaction is Random endo-hydrolysis of N-acetyl-beta-D-glucosaminide (1-&gt;4)-beta-linkages in chitin and chitodextrins.. Functionally, may play a role in defense against fungal pathogens containing chitin. This chain is Chitinase 9 (Cht9), found in Oryza sativa subsp. japonica (Rice).